A 384-amino-acid chain; its full sequence is Acetylgalactosaminyl-O-glycosyl-glycoprotein beta-1,3-N-acetylglucosaminyltransferase (384 aa).

At 1-12 the chain is on the cytoplasmic side; that stretch reads MAFPCRRSLTAK. Residues 13 to 31 traverse the membrane as a helical; Signal-anchor for type II membrane protein segment; sequence TLACLLVGVSFLALQQWFL. The Lumenal portion of the chain corresponds to 32–384; the sequence is QAPRSPREER…LSCDRGHRVS (353 aa). Positions 34–68 are disordered; it reads PRSPREERSPQEETPEGPTDAPAADEPPSELVPGP. Residues Asn-73, Asn-77, and Asn-196 are each glycosylated (N-linked (GlcNAc...) asparagine).

This sequence belongs to the glycosyltransferase 31 family. As to expression, present in stomach and colon (at protein level). Restricted in the stomach, colon and small intestine, where core 3 structure is present.

Its subcellular location is the golgi apparatus membrane. The enzyme catalyses a 3-O-[N-acetyl-alpha-D-galactosaminyl]-L-threonyl-[protein] + UDP-N-acetyl-alpha-D-glucosamine = a 3-O-[N-acetyl-beta-D-glucosaminyl-(1-&gt;3)-N-acetyl-alpha-D-galactosaminyl]-L-threonyl-[protein] + UDP + H(+). It catalyses the reaction a 3-O-[N-acetyl-alpha-D-galactosaminyl]-L-seryl-[protein] + UDP-N-acetyl-alpha-D-glucosamine = 3-O-[N-acetyl-beta-D-glucosaminyl-(1-&gt;3)-N-acetyl-alpha-D-galactosaminyl]-L-seryl-[protein] + UDP + H(+). The protein operates within protein modification; protein glycosylation. Beta-1,3-N-acetylglucosaminyltransferase that synthesizes the core 3 structure of the O-glycan, an important precursor in the biosynthesis of mucin-type glycoproteins. Plays an important role in the synthesis of mucin-type O-glycans in digestive organs. This chain is Acetylgalactosaminyl-O-glycosyl-glycoprotein beta-1,3-N-acetylglucosaminyltransferase (B3GNT6), found in Homo sapiens (Human).